We begin with the raw amino-acid sequence, 290 residues long: UPF0761 membrane protein YihY (290 aa).

A run of 6 helical transmembrane segments spans residues 44–64 (LLSL…FPMF), 104–124 (VGAC…DSAL), 140–160 (FAVY…SLAI), 183–203 (IFPL…VPTI), 210–230 (AIVG…GFAL), and 244–264 (VLAV…IVLL).

The protein belongs to the UPF0761 family.

It is found in the cell inner membrane. The sequence is that of UPF0761 membrane protein YihY from Escherichia coli O7:K1 (strain IAI39 / ExPEC).